Here is a 328-residue protein sequence, read N- to C-terminus: UPF0252 protein PF0978 (328 aa).

Residues 3–23 form a helical membrane-spanning segment; it reads VPLLILLFLVLTSGCIAPSTP.

The protein belongs to the UPF0252 family.

It is found in the membrane. In Pyrococcus furiosus (strain ATCC 43587 / DSM 3638 / JCM 8422 / Vc1), this protein is UPF0252 protein PF0978.